Reading from the N-terminus, the 1499-residue chain is Ring canal kelch homolog (1499 aa).

Residues 56–66 (LDESSQKQLPR) are compositionally biased toward polar residues. Residues 56 to 75 (LDESSQKQLPRSNGKEKTTG) are disordered. In terms of domain architecture, BTB spans 100-166 (CDVVLVAEGI…VYRAVVEVTE (67 aa)). Kelch repeat units lie at residues 351 to 396 (VLLV…VLGD), 397 to 443 (KVYA…VLNN), 444 to 490 (CIYA…VVNG), 492 to 539 (LYAV…VLDN), 541 to 586 (LYAV…AHNG), and 588 to 634 (LYVV…MIDK). Sec-637 is a non-standard amino acid (selenocysteine). Disordered stretches follow at residues 679–714 (AGQA…GNNV), 750–786 (LQYA…GGGG), 825–856 (AGYD…CPNL), 984–1017 (NQSN…SSSV), 1033–1085 (SMNN…GNGG), 1107–1160 (ASTS…PVDV), 1301–1321 (QVGR…PLRT), and 1334–1499 (ARSP…TASE). Low complexity predominate over residues 698-713 (NPEPANSNNSAPNGNN). Gly residues predominate over residues 776-786 (GERGAVGGGGG). Residues 986 to 1003 (SNSSSASSASPYGANGPA) show a composition bias toward low complexity. Residues 1004 to 1017 (TTSQPNPTKDSSSV) show a composition bias toward polar residues. Residues 1040 to 1054 (SSAAHGTASGSAPAA) show a composition bias toward low complexity. The span at 1065–1085 (ISGGASGGGAGGAGSSGGNGG) shows a compositional bias: gly residues. Residues 1107 to 1119 (ASTSTTLGGKSTG) show a composition bias toward low complexity. Over residues 1135–1147 (GPSDPTAGTSAPQ) the composition is skewed to polar residues. Residues 1348–1359 (NREKPREVRRIT) show a composition bias toward basic and acidic residues. Residues 1401–1410 (SSASSSSDSD) show a composition bias toward low complexity. A compositionally biased stretch (polar residues) spans 1460 to 1471 (VGSSSNETSDSL).

It localises to the cytoplasm. It is found in the cytoskeleton. May play a role in organizing the actin cytoskeleton. The polypeptide is Ring canal kelch homolog (Anopheles stephensi (Indo-Pakistan malaria mosquito)).